A 410-amino-acid chain; its full sequence is Retrovirus-related Pol polyprotein from type-1 retrotransposable element R1 2 (410 aa).

Positions 1–118 (GCPQGSIGGP…SCFRYLGVNV (118 aa)) constitute a Reverse transcriptase domain. Residues 254–410 (SSVIKLERLV…RLNLELDVNG (157 aa)) are nucleic acid-binding endonuclease.

The catalysed reaction is DNA(n) + a 2'-deoxyribonucleoside 5'-triphosphate = DNA(n+1) + diphosphate. This is Retrovirus-related Pol polyprotein from type-1 retrotransposable element R1 2 from Nasonia vitripennis (Parasitic wasp).